Consider the following 280-residue polypeptide: MEESDIYYWKGVAVRMAEQVERAVSPLVGTEDAGEIIKMGADGTPTKLIDLVAEDEAVGVLESTGRPVTIISEEIGVLHINSEGDEPGIIFVVDPLDGTSNAIRNIPFYGISVAVAERHPDGAAPTLNNVLMGFVKNFATGDLYWAIKGQGAFLNEKAISSSSQSSLDRTSLGAFIYGTRFRRVDSICRVIRRMRILGSVALELAYVASGSYDAFMDLRENLRIVDIAASKLIVEEAGGVVTNERGGEIDGLLNVKARTSLVAAGNLELHEKIMQTLEVI.

Residues Glu-73, Asp-94, Leu-96, and Asp-97 each coordinate Mg(2+). Substrate is bound by residues 97–99, Arg-195, Val-200, and Arg-219; that span reads DGT. Asp-226 is a Mg(2+) binding site.

It belongs to the inositol monophosphatase superfamily. FBPase class 4 family. Requires Mg(2+) as cofactor.

It carries out the reaction beta-D-fructose 1,6-bisphosphate + H2O = beta-D-fructose 6-phosphate + phosphate. The enzyme catalyses a myo-inositol phosphate + H2O = myo-inositol + phosphate. Functionally, phosphatase with broad specificity; it can dephosphorylate fructose 1,6-bisphosphate, and both D and L isomers of inositol-1-phosphate (I-1-P). The polypeptide is Fructose-1,6-bisphosphatase/inositol-1-monophosphatase (suhB) (Methanothermobacter thermautotrophicus (strain ATCC 29096 / DSM 1053 / JCM 10044 / NBRC 100330 / Delta H) (Methanobacterium thermoautotrophicum)).